Reading from the N-terminus, the 73-residue chain is Small ribosomal subunit protein bS18 (73 aa).

This sequence belongs to the bacterial ribosomal protein bS18 family. In terms of assembly, part of the 30S ribosomal subunit. Forms a tight heterodimer with protein bS6.

Binds as a heterodimer with protein bS6 to the central domain of the 16S rRNA, where it helps stabilize the platform of the 30S subunit. The protein is Small ribosomal subunit protein bS18 of Prochlorococcus marinus (strain MIT 9313).